We begin with the raw amino-acid sequence, 57 residues long: UPF0391 membrane protein azo1765 (57 aa).

The next 2 membrane-spanning stretches (helical) occupy residues 1-21 (MIKW…FGFT) and 33-53 (VLFF…VGLG).

This sequence belongs to the UPF0391 family.

It localises to the cell membrane. The chain is UPF0391 membrane protein azo1765 from Azoarcus sp. (strain BH72).